The chain runs to 130 residues: Small ribosomal subunit protein uS11c (130 aa).

This sequence belongs to the universal ribosomal protein uS11 family. Part of the 30S ribosomal subunit.

It is found in the plastid. It localises to the chloroplast. The polypeptide is Small ribosomal subunit protein uS11c (Porphyra purpurea (Red seaweed)).